We begin with the raw amino-acid sequence, 234 residues long: Small ribosomal subunit protein uS3 (234 aa).

The 69-residue stretch at 39–107 folds into the KH type-2 domain; sequence IRKFLKKELY…EVSINIKEVK (69 aa).

The protein belongs to the universal ribosomal protein uS3 family. As to quaternary structure, part of the 30S ribosomal subunit. Forms a tight complex with proteins S10 and S14.

In terms of biological role, binds the lower part of the 30S subunit head. Binds mRNA in the 70S ribosome, positioning it for translation. The chain is Small ribosomal subunit protein uS3 from Helicobacter acinonychis (strain Sheeba).